We begin with the raw amino-acid sequence, 354 residues long: DNA polymerase IV (354 aa).

The region spanning 14-198 (IIHIDMDAFF…MDIAKFHGVG (185 aa)) is the UmuC domain. Residues D18 and D116 each contribute to the Mg(2+) site. E117 is a catalytic residue.

The protein belongs to the DNA polymerase type-Y family. As to quaternary structure, monomer. Mg(2+) is required as a cofactor.

The protein resides in the cytoplasm. The catalysed reaction is DNA(n) + a 2'-deoxyribonucleoside 5'-triphosphate = DNA(n+1) + diphosphate. In terms of biological role, poorly processive, error-prone DNA polymerase involved in untargeted mutagenesis. Copies undamaged DNA at stalled replication forks, which arise in vivo from mismatched or misaligned primer ends. These misaligned primers can be extended by PolIV. Exhibits no 3'-5' exonuclease (proofreading) activity. May be involved in translesional synthesis, in conjunction with the beta clamp from PolIII. This chain is DNA polymerase IV, found in Streptococcus gordonii (strain Challis / ATCC 35105 / BCRC 15272 / CH1 / DL1 / V288).